The sequence spans 321 residues: tRNA dimethylallyltransferase (321 aa).

25–32 serves as a coordination point for ATP; the sequence is GPTASGKS. 27 to 32 is a binding site for substrate; the sequence is TASGKS. The segment at 50 to 53 is interaction with substrate tRNA; sequence DSMQ.

Belongs to the IPP transferase family. As to quaternary structure, monomer. Mg(2+) is required as a cofactor.

It carries out the reaction adenosine(37) in tRNA + dimethylallyl diphosphate = N(6)-dimethylallyladenosine(37) in tRNA + diphosphate. Its function is as follows. Catalyzes the transfer of a dimethylallyl group onto the adenine at position 37 in tRNAs that read codons beginning with uridine, leading to the formation of N6-(dimethylallyl)adenosine (i(6)A). This Rhodopseudomonas palustris (strain ATCC BAA-98 / CGA009) protein is tRNA dimethylallyltransferase.